The chain runs to 336 residues: D-alanine--D-alanine ligase (336 aa).

Positions 124–330 (KMWFSALGIP…FTQYLSLVIN (207 aa)) constitute an ATP-grasp domain. An ATP-binding site is contributed by 154 to 209 (ALEKWGSIFVKAASQGSSVGCYKVDEASKVLGVLKDAFGYAPYVIVEKTIKARELE). Mg(2+) contacts are provided by Asp284, Glu297, and Asn299.

It belongs to the D-alanine--D-alanine ligase family. Requires Mg(2+) as cofactor. It depends on Mn(2+) as a cofactor.

The protein localises to the cytoplasm. The catalysed reaction is 2 D-alanine + ATP = D-alanyl-D-alanine + ADP + phosphate + H(+). Its pathway is cell wall biogenesis; peptidoglycan biosynthesis. Cell wall formation. The chain is D-alanine--D-alanine ligase from Shewanella oneidensis (strain ATCC 700550 / JCM 31522 / CIP 106686 / LMG 19005 / NCIMB 14063 / MR-1).